The sequence spans 406 residues: Membrane protein UL43 homolog (406 aa).

10 consecutive transmembrane segments (helical) span residues L48–V68, A71–V91, C103–S123, L126–V146, I162–Y182, Y188–A208, S266–I286, L299–Y319, I339–A359, and V386–S406.

This sequence belongs to the alphaherpesvirinae HHV-1 UL43 family.

The protein resides in the membrane. The sequence is that of Membrane protein UL43 homolog from Varicella-zoster virus (strain Dumas) (HHV-3).